A 222-amino-acid chain; its full sequence is MHIPDGYLGPITCAFFYLIMIPIWYKSIKELKKLDPRKLPLLGVLTAFSFLVMMFNLPVPDGTTAHMVGGTLIAILMDNPWVATIAISIVLIIQAIFFGDGGITCIGANCFNMGVVLPFVGYYVYKFLRDKVGEVIASGIGAYVGIVAAAIVAGFEFGLQPFIEPGYCPYPFTVSVPAMAFAHLITAGPAAAVVTAIVVWYVKKVRPDLFTSKEQQVSGVNA.

6 helical membrane-spanning segments follow: residues 3-23, 39-59, 81-101, 102-122, 135-155, and 180-200; these read IPDG…MIPI, LPLL…NLPV, WVAT…FGDG, GITC…FVGY, VIAS…VAGF, and AFAH…IVVW.

Belongs to the CbiM family.

It localises to the cell membrane. In terms of biological role, may be involved in metal transport. This is Putative metal transport protein MJ1569 from Methanocaldococcus jannaschii (strain ATCC 43067 / DSM 2661 / JAL-1 / JCM 10045 / NBRC 100440) (Methanococcus jannaschii).